The following is a 429-amino-acid chain: Glutamyl-tRNA reductase (429 aa).

Residues 50–53 (TCNR), Ser110, 115–117 (ETQ), and Gln121 contribute to the substrate site. Residue Cys51 is the Nucleophile of the active site. 190–195 (GAGEMA) serves as a coordination point for NADP(+).

The protein belongs to the glutamyl-tRNA reductase family. In terms of assembly, homodimer.

The enzyme catalyses (S)-4-amino-5-oxopentanoate + tRNA(Glu) + NADP(+) = L-glutamyl-tRNA(Glu) + NADPH + H(+). The protein operates within porphyrin-containing compound metabolism; protoporphyrin-IX biosynthesis; 5-aminolevulinate from L-glutamyl-tRNA(Glu): step 1/2. Functionally, catalyzes the NADPH-dependent reduction of glutamyl-tRNA(Glu) to glutamate 1-semialdehyde (GSA). The sequence is that of Glutamyl-tRNA reductase from Campylobacter hominis (strain ATCC BAA-381 / DSM 21671 / CCUG 45161 / LMG 19568 / NCTC 13146 / CH001A).